A 201-amino-acid polypeptide reads, in one-letter code: Lipopolysaccharide core heptose(II)-phosphate phosphatase (201 aa).

Positions 1–35 (MLAFTLRFIKNKRYFAILAGALVIIAGLTSQHAWS) are cleaved as a signal peptide.

The protein belongs to the phosphoglycerate mutase family. Ais subfamily.

The protein localises to the periplasm. It functions in the pathway bacterial outer membrane biogenesis; lipopolysaccharide metabolism. Catalyzes the dephosphorylation of heptose(II) of the outer membrane lipopolysaccharide core. In Salmonella enteritidis PT4 (strain P125109), this protein is Lipopolysaccharide core heptose(II)-phosphate phosphatase.